Reading from the N-terminus, the 269-residue chain is Cell wall protein TIR3 (269 aa).

The signal sequence occupies residues 1-22 (MSFTKIAALLAVAAASTQLVSA). Residues 128-242 (SGSESATASS…TNSSSSATSK (115 aa)) are disordered. Asn-234 carries N-linked (GlcNAc...) asparagine glycosylation. Gly-245 carries the GPI-anchor amidated glycine lipid modification. The propeptide at 246–269 (AAMDMGFFSAGVGAAIAGAAAMLL) is removed in mature form.

The protein belongs to the SRP1/TIP1 family. In terms of processing, extensively O-glycosylated. The GPI-anchor is attached to the protein in the endoplasmic reticulum and serves to target the protein to the cell surface. There, the glucosamine-inositol phospholipid moiety is cleaved off and the GPI-modified mannoprotein is covalently attached via its lipidless GPI glycan remnant to the 1,6-beta-glucan of the outer cell wall layer.

The protein resides in the secreted. Its subcellular location is the cell wall. It localises to the membrane. Functionally, component of the cell wall. Required for anaerobic growth. This Saccharomyces cerevisiae (strain ATCC 204508 / S288c) (Baker's yeast) protein is Cell wall protein TIR3 (TIR3).